A 438-amino-acid chain; its full sequence is Coenzyme A disulfide reductase (438 aa).

8–33 (GAVAGGATCASQIRRLDKESDIIIFE) contributes to the FAD binding site. Residues Thr15, Gln19, Arg22, Ser39, and Asn42 each contribute to the substrate site. Cys43 serves as the catalytic Nucleophile. The Redox-active role is filled by Cys43. Residue Lys71 participates in substrate binding. NADP(+) is bound at residue 151–166 (VLVIGAGYVSLEVLEN). 267–277 (TNVPNIYAIGD) serves as a coordination point for FAD. His299 serves as a coordination point for substrate. Tyr419 provides a ligand contact to FAD. Lys427 is a substrate binding site.

The protein belongs to the class-III pyridine nucleotide-disulfide oxidoreductase family. As to quaternary structure, homodimer. Requires FAD as cofactor.

It carries out the reaction NADP(+) + 2 CoA = CoA-disulfide + NADPH + H(+). Its function is as follows. Catalyzes specifically the NADPH-dependent reduction of coenzyme A disulfide. In Staphylococcus aureus (strain JH1), this protein is Coenzyme A disulfide reductase.